Consider the following 471-residue polypeptide: Tripartite motif-containing protein 60 (471 aa).

The RING-type zinc-finger motif lies at 16–57 (CPICLEYLKDPVTINCGHNFCRSCLSVSWKDLDDTFPCPVCR). The segment at 92–133 (KENAMCEKHNQFLTLFCVKDLEILCTQCSFSTKHQKHYICPI) adopts a B box-type zinc-finger fold. Zn(2+)-binding residues include Cys97, His100, Cys119, and His125. Residues 171–223 (ELKKKVEYKREEINSEFEQIRLFLQNEQEMILRQIQDEEMNILAKLNENLVEL) adopt a coiled-coil conformation. Positions 277–470 (FSLPPQYSGL…LKICSVSDSE (194 aa)) constitute a B30.2/SPRY domain.

This sequence belongs to the TRIM/RBCC family.

Its function is as follows. E3 SUMO-protein ligase that mediates SUMOylation of TAB2 leading to inhibition of NF-kappa-B and MAPK pathways by suppressing the TRAF6/TAB2/TAK1 complex. In Homo sapiens (Human), this protein is Tripartite motif-containing protein 60 (TRIM60).